The chain runs to 253 residues: 5'/3'-nucleotidase SurE (253 aa).

Positions 8, 9, 39, and 92 each coordinate a divalent metal cation.

It belongs to the SurE nucleotidase family. The cofactor is a divalent metal cation.

Its subcellular location is the cytoplasm. The enzyme catalyses a ribonucleoside 5'-phosphate + H2O = a ribonucleoside + phosphate. It carries out the reaction a ribonucleoside 3'-phosphate + H2O = a ribonucleoside + phosphate. The catalysed reaction is [phosphate](n) + H2O = [phosphate](n-1) + phosphate + H(+). Its function is as follows. Nucleotidase with a broad substrate specificity as it can dephosphorylate various ribo- and deoxyribonucleoside 5'-monophosphates and ribonucleoside 3'-monophosphates with highest affinity to 3'-AMP. Also hydrolyzes polyphosphate (exopolyphosphatase activity) with the preference for short-chain-length substrates (P20-25). Might be involved in the regulation of dNTP and NTP pools, and in the turnover of 3'-mononucleotides produced by numerous intracellular RNases (T1, T2, and F) during the degradation of various RNAs. The polypeptide is 5'/3'-nucleotidase SurE (Shigella dysenteriae serotype 1 (strain Sd197)).